We begin with the raw amino-acid sequence, 360 residues long: Histidinol-phosphate aminotransferase (360 aa).

Lys222 carries the N6-(pyridoxal phosphate)lysine modification.

This sequence belongs to the class-II pyridoxal-phosphate-dependent aminotransferase family. Histidinol-phosphate aminotransferase subfamily. Pyridoxal 5'-phosphate serves as cofactor.

The catalysed reaction is L-histidinol phosphate + 2-oxoglutarate = 3-(imidazol-4-yl)-2-oxopropyl phosphate + L-glutamate. It functions in the pathway amino-acid biosynthesis; L-histidine biosynthesis; L-histidine from 5-phospho-alpha-D-ribose 1-diphosphate: step 7/9. The chain is Histidinol-phosphate aminotransferase from Haloarcula marismortui (strain ATCC 43049 / DSM 3752 / JCM 8966 / VKM B-1809) (Halobacterium marismortui).